A 376-amino-acid chain; its full sequence is Putative 12-oxophytodienoate reductase 2 (376 aa).

FMN contacts are provided by residues 31-33, Ala-64, and Gln-106; that span reads PLT. 178–181 is a binding site for substrate; sequence HGAH. Residue Tyr-183 is the Proton donor of the active site. FMN-binding positions include Arg-230, Gly-301, and 322–323; that span reads GR.

Belongs to the NADH:flavin oxidoreductase/NADH oxidase family. FMN is required as a cofactor.

Putative oxophytodienoate reductase that may be involved in the biosynthesis or metabolism of oxylipin signaling molecules. The sequence is that of Putative 12-oxophytodienoate reductase 2 (OPR2) from Oryza sativa subsp. japonica (Rice).